The following is a 249-amino-acid chain: 1-(5-phosphoribosyl)-5-[(5-phosphoribosylamino)methylideneamino] imidazole-4-carboxamide isomerase (249 aa).

The active-site Proton acceptor is the Asp-8. The active-site Proton donor is the Asp-130.

It belongs to the HisA/HisF family.

It localises to the cytoplasm. The enzyme catalyses 1-(5-phospho-beta-D-ribosyl)-5-[(5-phospho-beta-D-ribosylamino)methylideneamino]imidazole-4-carboxamide = 5-[(5-phospho-1-deoxy-D-ribulos-1-ylimino)methylamino]-1-(5-phospho-beta-D-ribosyl)imidazole-4-carboxamide. It participates in amino-acid biosynthesis; L-histidine biosynthesis; L-histidine from 5-phospho-alpha-D-ribose 1-diphosphate: step 4/9. The chain is 1-(5-phosphoribosyl)-5-[(5-phosphoribosylamino)methylideneamino] imidazole-4-carboxamide isomerase from Chromohalobacter salexigens (strain ATCC BAA-138 / DSM 3043 / CIP 106854 / NCIMB 13768 / 1H11).